The sequence spans 433 residues: Phosphomethylpyrimidine synthase (433 aa).

Substrate-binding positions include Asn69, Met98, Tyr127, His163, Ser185–Gly187, Asp226–Arg229, and Glu265. A Zn(2+)-binding site is contributed by His269. Substrate is bound at residue Tyr292. Zn(2+) is bound at residue His333. Residues Cys409, Cys412, and Cys416 each coordinate [4Fe-4S] cluster.

This sequence belongs to the ThiC family. It depends on [4Fe-4S] cluster as a cofactor.

The catalysed reaction is 5-amino-1-(5-phospho-beta-D-ribosyl)imidazole + S-adenosyl-L-methionine = 4-amino-2-methyl-5-(phosphooxymethyl)pyrimidine + CO + 5'-deoxyadenosine + formate + L-methionine + 3 H(+). The protein operates within cofactor biosynthesis; thiamine diphosphate biosynthesis. Functionally, catalyzes the synthesis of the hydroxymethylpyrimidine phosphate (HMP-P) moiety of thiamine from aminoimidazole ribotide (AIR) in a radical S-adenosyl-L-methionine (SAM)-dependent reaction. The chain is Phosphomethylpyrimidine synthase from Clostridioides difficile (strain 630) (Peptoclostridium difficile).